We begin with the raw amino-acid sequence, 406 residues long: Glycosylated lysosomal membrane protein (406 aa).

The signal sequence occupies residues methionine 1 to glycine 35. Over glutamate 36–glycine 372 the chain is Lumenal. 5 N-linked (GlcNAc...) asparagine glycosylation sites follow: asparagine 65, asparagine 134, asparagine 159, asparagine 187, and asparagine 230. The helical transmembrane segment at isoleucine 373–leucine 393 threads the bilayer. The Cytoplasmic portion of the chain corresponds to leucine 394–asparagine 406. Positions tyrosine 402–asparagine 406 match the Lysosomal targeting motif motif.

It belongs to the GLMP family. In terms of assembly, interacts (via lumenal domain) with lysosomal protein MFSD1; the interaction starts while both proteins are still in the endoplasmic reticulum and is required for stabilization of MFSD1 in lysosomes but has no direct effect on its targeting to lysosomes or transporter activity. In terms of processing, highly N-glycosylated. N-glycosylation is essential for GLMP stability and for MFSD1 lysosomal localization.

It is found in the lysosome membrane. Functionally, required to protect lysosomal transporter MFSD1 from lysosomal proteolysis and for MFSD1 lysosomal localization. The chain is Glycosylated lysosomal membrane protein from Homo sapiens (Human).